The primary structure comprises 304 residues: Large ribosomal subunit protein uL2 (304 aa).

The tract at residues histidine 246 to tyrosine 282 is disordered. Over residues aspartate 256–glutamate 272 the composition is skewed to basic and acidic residues.

This sequence belongs to the universal ribosomal protein uL2 family. As to quaternary structure, part of the 50S ribosomal subunit. Forms a bridge to the 30S subunit in the 70S ribosome.

Its function is as follows. One of the primary rRNA binding proteins. Required for association of the 30S and 50S subunits to form the 70S ribosome, for tRNA binding and peptide bond formation. It has been suggested to have peptidyltransferase activity; this is somewhat controversial. Makes several contacts with the 16S rRNA in the 70S ribosome. The sequence is that of Large ribosomal subunit protein uL2 from Aquifex aeolicus (strain VF5).